Consider the following 483-residue polypeptide: MKHIVKNIHFVGIGGAGMSGIAEVLLNLGYRVTGSDLGQSAATQRLTALGATVMQGHAPEHVVGANAVVVSTAVRGDNPEVLAARAKRIPIVPRAVMLAELMRLKQGIAIAGTHGKTTTTSLVASVLAEGGLDPTFVIGGRLNSAGANARLGTGDFIVAEADESDASFLNLFPVIEVITNIDADHMDTYGHDFARLKQAFIEFTHRLPFYGIAVLCVDDPNVREILPFVSKPVVRYGFAEDAQVRAVNARAVDGRMEFTVIRQLNGHAEPPLSITLNLPGMHNVQNALAAIAIATELEVPDEAIVKALAEFNGVGRRFQRYGEVPTADGQGRFTLIDDYGHHPVEMAATLAAARGAFPGRRLVLAFQPHRFTRTRDCFEDFIKVLGTVDALLLAEVYAAGEPPIVAADGRALTRALRVAGKIEPVFVEQIEDMPQAILDAAQDNDVVITMGAGSIGQVPGQVVARQAEVRAANVVDLNGGAAA.

112-118 contacts ATP; that stretch reads GTHGKTT.

Belongs to the MurCDEF family.

It localises to the cytoplasm. It catalyses the reaction UDP-N-acetyl-alpha-D-muramate + L-alanine + ATP = UDP-N-acetyl-alpha-D-muramoyl-L-alanine + ADP + phosphate + H(+). The protein operates within cell wall biogenesis; peptidoglycan biosynthesis. Functionally, cell wall formation. In Ralstonia nicotianae (strain ATCC BAA-1114 / GMI1000) (Ralstonia solanacearum), this protein is UDP-N-acetylmuramate--L-alanine ligase.